The chain runs to 170 residues: Macro domain-containing protein VPA0103 (170 aa).

The Macro domain maps to Met1–His170.

The protein belongs to the MacroD-type family.

This chain is Macro domain-containing protein VPA0103, found in Vibrio parahaemolyticus serotype O3:K6 (strain RIMD 2210633).